We begin with the raw amino-acid sequence, 21 residues long: Large ribosomal subunit protein uL29 (21 aa).

It belongs to the universal ribosomal protein uL29 family.

This chain is Large ribosomal subunit protein uL29 (rpmC), found in Brevundimonas diminuta (Pseudomonas diminuta).